A 414-amino-acid chain; its full sequence is Serine hydroxymethyltransferase (414 aa).

Residues L121 and 125–127 (GHL) contribute to the (6S)-5,6,7,8-tetrahydrofolate site. Residue K229 is modified to N6-(pyridoxal phosphate)lysine.

This sequence belongs to the SHMT family. Homodimer. Pyridoxal 5'-phosphate is required as a cofactor.

Its subcellular location is the cytoplasm. The enzyme catalyses (6R)-5,10-methylene-5,6,7,8-tetrahydrofolate + glycine + H2O = (6S)-5,6,7,8-tetrahydrofolate + L-serine. It functions in the pathway one-carbon metabolism; tetrahydrofolate interconversion. The protein operates within amino-acid biosynthesis; glycine biosynthesis; glycine from L-serine: step 1/1. Catalyzes the reversible interconversion of serine and glycine with tetrahydrofolate (THF) serving as the one-carbon carrier. This reaction serves as the major source of one-carbon groups required for the biosynthesis of purines, thymidylate, methionine, and other important biomolecules. Also exhibits THF-independent aldolase activity toward beta-hydroxyamino acids, producing glycine and aldehydes, via a retro-aldol mechanism. This chain is Serine hydroxymethyltransferase, found in Polynucleobacter necessarius subsp. necessarius (strain STIR1).